Consider the following 508-residue polypeptide: Flagellin (508 aa).

Belongs to the bacterial flagellin family.

Its subcellular location is the secreted. It is found in the bacterial flagellum. Functionally, flagellin is the subunit protein which polymerizes to form the filaments of bacterial flagella. The polypeptide is Flagellin (fliC) (Salmonella berta).